The following is a 210-amino-acid chain: Large ribosomal subunit protein uL3 (210 aa).

Residues 125 to 151 (RHGQSRGPMSHGSRYHRRPGSMGPVAP) are disordered.

It belongs to the universal ribosomal protein uL3 family. As to quaternary structure, part of the 50S ribosomal subunit. Forms a cluster with proteins L14 and L19.

In terms of biological role, one of the primary rRNA binding proteins, it binds directly near the 3'-end of the 23S rRNA, where it nucleates assembly of the 50S subunit. In Bacillus cereus (strain ATCC 14579 / DSM 31 / CCUG 7414 / JCM 2152 / NBRC 15305 / NCIMB 9373 / NCTC 2599 / NRRL B-3711), this protein is Large ribosomal subunit protein uL3.